Reading from the N-terminus, the 480-residue chain is Gasdermin-C3 (480 aa).

Residues 1-226 (MGYSFDRASK…TCVILPSATK (226 aa)) form a triggers pyroptosis region.

It belongs to the gasdermin family. In terms of assembly, homooligomer; homooligomeric ring-shaped pore complex containing 27-28 subunits when inserted in the membrane. Post-translationally, cleavage by CASP8 relieves autoinhibition by releasing the N-terminal moiety (Gasdermin-C3, N-terminal) that initiates pyroptosis. Palmitoylated.

Its subcellular location is the cytoplasm. The protein resides in the cytosol. It localises to the cell membrane. Its activity is regulated as follows. The full-length protein before cleavage is inactive: intramolecular interactions between N- and C-terminal domains mediate autoinhibition in the absence of activation signal. The intrinsic pyroptosis-inducing activity is carried by the released N-terminal moiety (Gasdermin-C3, N-terminal) following cleavage by caspase CASP8. This form constitutes the precursor of the pore-forming protein: upon cleavage, the released N-terminal moiety (Gasdermin-C3, N-terminal) binds to membranes and forms pores, triggering pyroptosis. Its function is as follows. Pore-forming protein that causes membrane permeabilization and pyroptosis. Produced by the cleavage of gasdermin-C3 by caspase CASP8 in response to death signals. After cleavage, moves to the plasma membrane where it strongly binds to membrane inner leaflet lipids. Homooligomerizes within the membrane and forms pores of 10-15 nanometers (nm) of inner diameter, triggering pyroptosis. The polypeptide is Gasdermin-C3 (Mus musculus (Mouse)).